A 565-amino-acid chain; its full sequence is NAD-dependent malic enzyme (565 aa).

Y104 (proton donor) is an active-site residue. Residue R157 participates in NAD(+) binding. K175 serves as the catalytic Proton acceptor. A divalent metal cation is bound by residues E246, D247, and D270. 2 residues coordinate NAD(+): D270 and N418.

The protein belongs to the malic enzymes family. Homotetramer. Mg(2+) serves as cofactor. The cofactor is Mn(2+).

It carries out the reaction (S)-malate + NAD(+) = pyruvate + CO2 + NADH. The enzyme catalyses oxaloacetate + H(+) = pyruvate + CO2. In Salmonella dublin (strain CT_02021853), this protein is NAD-dependent malic enzyme.